A 429-amino-acid polypeptide reads, in one-letter code: Probable proton-coupled zinc antiporter SLC30A4 (429 aa).

Over 1-113 the chain is Cytoplasmic; it reads MAGSGAWKRL…ILKQRKVKAR (113 aa). Residues 114-134 traverse the membrane as a helical segment; the sequence is LTIAAVLYLLFMIGELVGGYI. Residues 135–143 are Lumenal-facing; the sequence is ANSLAIMTD. A helical transmembrane segment spans residues 144 to 164; the sequence is ALHMLTDLSAIILTLLALWLS. Residues H146 and D150 each coordinate Zn(2+). The Cytoplasmic portion of the chain corresponds to 165–178; that stretch reads SKSPTKRFTFGFHR. A helical membrane pass occupies residues 179–199; the sequence is LEVLSAMISVLLVYILMGFLL. The Lumenal portion of the chain corresponds to 200–216; sequence YEAVQRTIHMNYEINGD. A helical transmembrane segment spans residues 217–237; it reads IMLITAAVGVAVNVIMGFLLN. Residues 238-274 lie on the Cytoplasmic side of the membrane; that stretch reads QSGHRHSHSHSLPSNSPTRGSGCERNHGQDSLAVRAA. Residues 240–264 are zinc binding; sequence GHRHSHSHSLPSNSPTRGSGCERNH. Residues 275–295 form a helical membrane-spanning segment; it reads FVHALGDLVQSVGVLIAAYII. Zn(2+) contacts are provided by H277 and D281. Residues 296-310 lie on the Lumenal side of the membrane; the sequence is RFKPEYKIADPICTY. A helical membrane pass occupies residues 311-331; it reads VFSLLVAFTTFRIIWDTVVII. The Cytoplasmic portion of the chain corresponds to 332–429; sequence LEGVPSHLNV…TCANCQSSSP (98 aa).

Belongs to the cation diffusion facilitator (CDF) transporter (TC 2.A.4) family. SLC30A subfamily. In terms of assembly, homodimer; dityrosine-linked. Homodimerization could be specific of the human protein and enhances the zinc transport efficiency. Interacts with TMEM163. Post-translationally, homodimerization through dityrosine bonds is stimulated by oxidative stress.

The protein localises to the endosome membrane. It is found in the late endosome membrane. Its subcellular location is the lysosome membrane. The enzyme catalyses Zn(2+)(in) + 2 H(+)(out) = Zn(2+)(out) + 2 H(+)(in). Probable proton-coupled zinc ion antiporter mediating zinc import from cytoplasm potentially into the endocytic compartment. Controls zinc deposition in milk. This is Probable proton-coupled zinc antiporter SLC30A4 from Homo sapiens (Human).